A 468-amino-acid chain; its full sequence is UDP-N-acetylmuramate--L-alanine ligase (468 aa).

Residue 112–118 (GMHGKTT) coordinates ATP.

It belongs to the MurCDEF family.

It is found in the cytoplasm. The catalysed reaction is UDP-N-acetyl-alpha-D-muramate + L-alanine + ATP = UDP-N-acetyl-alpha-D-muramoyl-L-alanine + ADP + phosphate + H(+). The protein operates within cell wall biogenesis; peptidoglycan biosynthesis. Functionally, cell wall formation. This is UDP-N-acetylmuramate--L-alanine ligase from Koribacter versatilis (strain Ellin345).